Here is a 72-residue protein sequence, read N- to C-terminus: Exodeoxyribonuclease 7 small subunit (72 aa).

Belongs to the XseB family. In terms of assembly, heterooligomer composed of large and small subunits.

Its subcellular location is the cytoplasm. The enzyme catalyses Exonucleolytic cleavage in either 5'- to 3'- or 3'- to 5'-direction to yield nucleoside 5'-phosphates.. Functionally, bidirectionally degrades single-stranded DNA into large acid-insoluble oligonucleotides, which are then degraded further into small acid-soluble oligonucleotides. The polypeptide is Exodeoxyribonuclease 7 small subunit (Ruegeria pomeroyi (strain ATCC 700808 / DSM 15171 / DSS-3) (Silicibacter pomeroyi)).